Reading from the N-terminus, the 189-residue chain is Interferon alpha-13 (189 aa).

An N-terminal signal peptide occupies residues 1-23 (MARPCAFLMVLVVLSYWSACSLG). 2 disulfides stabilise this stretch: Cys-24-Cys-122 and Cys-52-Cys-162. N-linked (GlcNAc...) asparagine glycosylation is found at Asn-94 and Asn-101.

Belongs to the alpha/beta interferon family.

It is found in the secreted. Functionally, exhibits antiviral activity against Theiler's virus, Mengo virus and vesicular stomatitis virus. Interferons alpha stimulate the production of two enzymes: a protein kinase and an oligoadenylate synthetase. The polypeptide is Interferon alpha-13 (Ifna13) (Mus musculus (Mouse)).